Consider the following 456-residue polypeptide: Heme sensor protein HssS (456 aa).

Transmembrane regions (helical) follow at residues 9-29 (IAIY…LFAN) and 164-184 (TFLA…VIAS). The 53-residue stretch at 186-238 (YSIIKPIKILKQATERLMHGDFNSPIYQSRHDEIGTLQYRFEAMRQSLKQVDD) folds into the HAMP domain. In terms of domain architecture, Histidine kinase spans 246 to 456 (NVSHEIKTPL…TFTVTLPETN (211 aa)). A Phosphohistidine; by autocatalysis modification is found at histidine 249.

Post-translationally, autophosphorylated.

It is found in the cell membrane. It catalyses the reaction ATP + protein L-histidine = ADP + protein N-phospho-L-histidine.. In terms of biological role, member of the two-component regulatory system HssS/HssR involved in intracellular heme homeostasis and tempering of staphylococcal virulence. HssS functions as a heme sensor histidine kinase which is autophosphorylated at a histidine residue and transfers its phosphate group to an aspartate residue of HssR. HssR/HssS activates the expression of hrtAB, an efflux pump, in response to extracellular heme, hemin, hemoglobin or blood. The polypeptide is Heme sensor protein HssS (hssS) (Staphylococcus haemolyticus (strain JCSC1435)).